Here is a 347-residue protein sequence, read N- to C-terminus: GMP reductase (347 aa).

108–131 (ADFEKTKQILDLNPALNFVCIDVA) lines the NADP(+) pocket. K(+) is bound by residues Gly181 and Gly183. Cys186 (thioimidate intermediate) is an active-site residue. Residue 216–239 (IVSDGGCTTPGDVAKAFGGGADFV) participates in NADP(+) binding.

The protein belongs to the IMPDH/GMPR family. GuaC type 1 subfamily. Homotetramer.

It carries out the reaction IMP + NH4(+) + NADP(+) = GMP + NADPH + 2 H(+). In terms of biological role, catalyzes the irreversible NADPH-dependent deamination of GMP to IMP. It functions in the conversion of nucleobase, nucleoside and nucleotide derivatives of G to A nucleotides, and in maintaining the intracellular balance of A and G nucleotides. This is GMP reductase from Escherichia coli O139:H28 (strain E24377A / ETEC).